The following is a 536-amino-acid chain: CTP synthase (536 aa).

The amidoligase domain stretch occupies residues 1–267; sequence MTKFIFVTGG…DDIVIKRLQL (267 aa). S13 contacts CTP. S13 contacts UTP. Position 14–19 (14–19) interacts with ATP; the sequence is SLGKGI. Y54 contributes to the L-glutamine binding site. An ATP-binding site is contributed by D71. Residues D71 and E141 each coordinate Mg(2+). CTP-binding positions include 148–150, 188–193, and K224; these read DIE and KTKPTQ. UTP contacts are provided by residues 188-193 and K224; that span reads KTKPTQ. ATP is bound at residue 240–242; that stretch reads RDA. Residues 293-535 form the Glutamine amidotransferase type-1 domain; the sequence is TIGLVGKYVS…IEASLKYQQN (243 aa). G355 lines the L-glutamine pocket. C382 (nucleophile; for glutamine hydrolysis) is an active-site residue. Residues 383–386, E406, and R463 each bind L-glutamine; that span reads LGMQ. Active-site residues include H508 and E510.

The protein belongs to the CTP synthase family. Homotetramer.

It carries out the reaction UTP + L-glutamine + ATP + H2O = CTP + L-glutamate + ADP + phosphate + 2 H(+). The catalysed reaction is L-glutamine + H2O = L-glutamate + NH4(+). The enzyme catalyses UTP + NH4(+) + ATP = CTP + ADP + phosphate + 2 H(+). It functions in the pathway pyrimidine metabolism; CTP biosynthesis via de novo pathway; CTP from UDP: step 2/2. Allosterically activated by GTP, when glutamine is the substrate; GTP has no effect on the reaction when ammonia is the substrate. The allosteric effector GTP functions by stabilizing the protein conformation that binds the tetrahedral intermediate(s) formed during glutamine hydrolysis. Inhibited by the product CTP, via allosteric rather than competitive inhibition. In terms of biological role, catalyzes the ATP-dependent amination of UTP to CTP with either L-glutamine or ammonia as the source of nitrogen. Regulates intracellular CTP levels through interactions with the four ribonucleotide triphosphates. In Staphylococcus aureus (strain COL), this protein is CTP synthase.